The sequence spans 685 residues: UvrABC system protein B (685 aa).

The region spanning 30–188 is the Helicase ATP-binding domain; it reads DGVLRGDRWQ…QELVSLHYIR (159 aa). 43 to 50 contributes to the ATP binding site; the sequence is GVTGSGKT. The Beta-hairpin signature appears at 96-119; that stretch reads YYDFYQPEAYLPALDKYIAKDLRI. Residues 435–597 enclose the Helicase C-terminal domain; that stretch reads QIDDLLAEIR…ITPRSIRKSL (163 aa). In terms of domain architecture, UVR spans 641 to 676; the sequence is YAMVAELRLEMNEAAIQMEYEKAAYLRDEIARLMHG.

It belongs to the UvrB family. As to quaternary structure, forms a heterotetramer with UvrA during the search for lesions. Interacts with UvrC in an incision complex.

The protein localises to the cytoplasm. Functionally, the UvrABC repair system catalyzes the recognition and processing of DNA lesions. A damage recognition complex composed of 2 UvrA and 2 UvrB subunits scans DNA for abnormalities. Upon binding of the UvrA(2)B(2) complex to a putative damaged site, the DNA wraps around one UvrB monomer. DNA wrap is dependent on ATP binding by UvrB and probably causes local melting of the DNA helix, facilitating insertion of UvrB beta-hairpin between the DNA strands. Then UvrB probes one DNA strand for the presence of a lesion. If a lesion is found the UvrA subunits dissociate and the UvrB-DNA preincision complex is formed. This complex is subsequently bound by UvrC and the second UvrB is released. If no lesion is found, the DNA wraps around the other UvrB subunit that will check the other stand for damage. This is UvrABC system protein B from Chlorobium phaeobacteroides (strain DSM 266 / SMG 266 / 2430).